The primary structure comprises 165 residues: MEMFQGLLLLLLLSMGGTWASREMLRPRCRPINATLAVEKEGCPVCITVNTTICAGYCPTMTRVLQGVLPALPQVVCNYRDVRFESIRLPGCPRGVNPVVSYAVALSCQCALCRRSTTDCGGPKDHPLTCDDPRFQASSSSKAPPPSLPSPSRLPGPSDTPILPQ.

Positions 1 to 20 are cleaved as a signal peptide; it reads MEMFQGLLLLLLLSMGGTWA. Disulfide bonds link Cys29–Cys77, Cys43–Cys92, Cys46–Cys130, Cys54–Cys108, Cys58–Cys110, and Cys113–Cys120. Asn33 and Asn50 each carry an N-linked (GlcNAc...) asparagine glycan. Residues 131–165 are disordered; sequence DDPRFQASSSSKAPPPSLPSPSRLPGPSDTPILPQ. O-linked (GalNAc...) serine glycosylation is found at Ser141, Ser147, Ser152, and Ser158. Over residues 143–154 the composition is skewed to pro residues; it reads APPPSLPSPSRL.

It belongs to the glycoprotein hormones subunit beta family. Heterodimer of a common alpha chain identical in LH, FSH, TSH and HCG and a unique beta chain distinct in each of the hormones and confers receptor and biological specificity. In terms of tissue distribution, high expression in the placenta throughout pregnancy.

Its subcellular location is the secreted. Its function is as follows. Beta subunit of the human chorionic gonadotropin (hCG). hCG is a complex glycoprotein composed of two glycosylated subunits alpha and beta which are non-covalently associated. The alpha subunit is identical to those in the pituitary gonadotropin hormones (LH, FSH and TSH). The beta subunits are distinct in each of the hormones and confer receptor and biological specificity. Has an essential role for pregnancy and maternal adaptation. Stimulates the ovaries to synthesize the steroids that are essential for the maintenance of pregnancy. The sequence is that of Choriogonadotropin subunit beta 7 from Homo sapiens (Human).